Consider the following 1330-residue polypeptide: ESX-3 secretion system protein EccC3 (1330 aa).

2 helical membrane passes run 43–63 (LPYL…ATGM) and 65–85 (VISP…TALY). FtsK domains follow at residues 456–662 (GEPL…SVSR), 811–1000 (RDPL…RDSN), and 1090–1280 (LAPV…ADSG). Residues 479-486 (GMTGSGKS), 829-836 (GGPKSGKS), and 1107-1114 (GDARSGKT) each bind ATP.

In terms of assembly, part of the ESX-3 / type VII secretion system (T7SS), which is composed of cytosolic and membrane components. The ESX-3 membrane complex is composed of EccB3, EccC3, EccD3 and EccE3.

It localises to the cell inner membrane. Part of the ESX-3 specialized secretion system, which is important for iron and zinc uptake or homeostasis. This is ESX-3 secretion system protein EccC3 from Mycobacterium tuberculosis (strain CDC 1551 / Oshkosh).